The sequence spans 298 residues: Nucleotide-binding protein MAV_3359 (298 aa).

18–25 contacts ATP; that stretch reads GLSGAGRG. Residue 69–72 participates in GTP binding; it reads DVRS.

The protein belongs to the RapZ-like family.

Its function is as follows. Displays ATPase and GTPase activities. This Mycobacterium avium (strain 104) protein is Nucleotide-binding protein MAV_3359.